A 458-amino-acid polypeptide reads, in one-letter code: UPF0210 protein Maeo_1412 (458 aa).

Belongs to the UPF0210 family.

The sequence is that of UPF0210 protein Maeo_1412 from Methanococcus aeolicus (strain ATCC BAA-1280 / DSM 17508 / OCM 812 / Nankai-3).